Here is a 320-residue protein sequence, read N- to C-terminus: Arylacetonitrilase (320 aa).

The CN hydrolase domain occupies 5 to 286 (IKASVVQAST…EGVISAELDL (282 aa)). Glu-46 (proton acceptor) is an active-site residue. Residue Lys-133 is part of the active site. Catalysis depends on Cys-178, which acts as the Nucleophile.

It belongs to the carbon-nitrogen hydrolase superfamily. Nitrilase family.

The enzyme catalyses a nitrile + 2 H2O = a carboxylate + NH4(+). Nitrilase that hydrolyzes preferentially fumaronitrile, while 3-phenylpropionitrile, beta-cyano-L-alanine and 4-cyanopyridine are transformed at much lower rates. This chain is Arylacetonitrilase (nit), found in Trametes versicolor (strain FP-101664) (White-rot fungus).